The primary structure comprises 154 residues: MNIIQGNLVGTGLKIGIVVGRFNDFITSKLLSGAEDALLRHGVDTNDIDVAWVPGAFEIPFAAKKMAETKKYDAIITLGTVIRGATTHYDYVCNEAAKGIAQAANTTGVPVIFGIVTTENIEQAIERAGTKAGNKGVDCAVSAIEMANLNRSFE.

5-amino-6-(D-ribitylamino)uracil is bound by residues F22–N23, A56–E58, and T80–I82. A85–T86 lines the (2S)-2-hydroxy-3-oxobutyl phosphate pocket. The Proton donor role is filled by H88. F113 is a 5-amino-6-(D-ribitylamino)uracil binding site. Position 127 (R127) interacts with (2S)-2-hydroxy-3-oxobutyl phosphate.

Belongs to the DMRL synthase family. As to quaternary structure, forms an icosahedral capsid composed of 60 subunits, arranged as a dodecamer of pentamers. Can interact with riboflavin synthase, forming a lumazine synthase/riboflavin synthase complex, also designated as 'heavy riboflavin synthase complex', which consists of a trimer of riboflavin synthase enclosed within the icosahedral structure composed of 60 subunits of 6,7-dimethyl-8-ribityllumazine synthase.

The catalysed reaction is (2S)-2-hydroxy-3-oxobutyl phosphate + 5-amino-6-(D-ribitylamino)uracil = 6,7-dimethyl-8-(1-D-ribityl)lumazine + phosphate + 2 H2O + H(+). The protein operates within cofactor biosynthesis; riboflavin biosynthesis; riboflavin from 2-hydroxy-3-oxobutyl phosphate and 5-amino-6-(D-ribitylamino)uracil: step 1/2. In terms of biological role, catalyzes the formation of 6,7-dimethyl-8-ribityllumazine by condensation of 5-amino-6-(D-ribitylamino)uracil with 3,4-dihydroxy-2-butanone 4-phosphate. This is the penultimate step in the biosynthesis of riboflavin. Is able to use the non-natural R enantiomer of 3,4-dihydroxy-2-butanone 4-phosphate as a substrate, but with less efficiency than the natural S enantiomer. Cannot use unphosphorylated 3,4-dihydroxy-2-butanone, 3,4-dihydroxy-2-butanone 3-phosphate or diacetyl as substrates. This Bacillus subtilis (strain 168) protein is 6,7-dimethyl-8-ribityllumazine synthase (ribH).